Here is an 85-residue protein sequence, read N- to C-terminus: WAP four-disulfide core domain protein 12 (85 aa).

The signal sequence occupies residues 1-21 (MWPNSILVLMTLLISSTLVTG). In terms of domain architecture, WAP spans 25–72 (KGEEKRVCPPDYVRCIRQDDPQCYSDNDCGDQEICCFWQCGFKCVLPV). 4 disulfides stabilise this stretch: cysteine 32/cysteine 60, cysteine 39/cysteine 64, cysteine 47/cysteine 59, and cysteine 53/cysteine 68.

In terms of tissue distribution, constitutively expressed in tongue.

The protein localises to the secreted. In terms of biological role, antibacterial protein which inhibits the growth of E.coli and S.aureus. Putative acid-stable proteinase inhibitor. In Mus musculus (Mouse), this protein is WAP four-disulfide core domain protein 12.